Consider the following 57-residue polypeptide: Catalase-1 (57 aa).

Y37 serves as a coordination point for heme.

In terms of assembly, homodimer. Heme serves as cofactor.

The catalysed reaction is 2 H2O2 = O2 + 2 H2O. In terms of biological role, decomposes hydrogen peroxide into water and oxygen; serves to protect cells from the toxic effects of hydrogen peroxide. This Comamonas terrigena protein is Catalase-1.